The primary structure comprises 552 residues: Protein FAM234A (552 aa).

Positions 1 to 22 are enriched in basic and acidic residues; it reads MLDHKDLEAEIHPLKNEERKSQ. The tract at residues 1–40 is disordered; that stretch reads MLDHKDLEAEIHPLKNEERKSQENLGNPSKNEDNVKSAPP. Residues 1-49 lie on the Cytoplasmic side of the membrane; sequence MLDHKDLEAEIHPLKNEERKSQENLGNPSKNEDNVKSAPPQSRLSRCRA. Ser-21 is modified (phosphoserine). A helical; Signal-anchor for type II membrane protein transmembrane segment spans residues 50-70; it reads AAFFLSLFLCLFVVFVVSFVI. Residues 71–552 are Extracellular-facing; that stretch reads PCPDRPASQR…FSRLRYQSEA (482 aa). Asn-116, Asn-314, Asn-389, and Asn-473 each carry an N-linked (GlcNAc...) asparagine glycan.

This sequence belongs to the FAM234 family.

Its subcellular location is the membrane. This is Protein FAM234A from Homo sapiens (Human).